Consider the following 259-residue polypeptide: 5'-nucleotidase SurE (259 aa).

A divalent metal cation contacts are provided by D8, D9, S39, and N98.

The protein belongs to the SurE nucleotidase family. The cofactor is a divalent metal cation.

It is found in the cytoplasm. The catalysed reaction is a ribonucleoside 5'-phosphate + H2O = a ribonucleoside + phosphate. In terms of biological role, nucleotidase that shows phosphatase activity on nucleoside 5'-monophosphates. In Fervidobacterium nodosum (strain ATCC 35602 / DSM 5306 / Rt17-B1), this protein is 5'-nucleotidase SurE.